Consider the following 270-residue polypeptide: MQCWIRQTINFFRKTKNTEKLTALLQQKEDILAVEIPVSLVYNGISHAVMMCSPNNLEDFALGFSLTEGIINKPEDIYGIDVVEVCNGIEVQIELSSRKFMALKEHRRNLTGRTGCGICGTEQLNQVYKTFPKLDCTFQFDLNLLDSCLIDLQKNQLLGCKTGATHACAFFDLYGSMLAIYEDVGRHVALDKLLGWHAKSGKPRGFILASSRASYEMVQKTVACGVEMLVTISAATDLAVTMAEKHNLTLIGFAREGKGNIYSGHLRLHN.

Residue C116 is the Cysteine persulfide intermediate of the active site. Position 253–258 (253–258 (FAREGK)) interacts with Mo-bis(molybdopterin guanine dinucleotide).

It belongs to the FdhD family.

The protein resides in the cytoplasm. Functionally, required for formate dehydrogenase (FDH) activity. Acts as a sulfur carrier protein that transfers sulfur from IscS to the molybdenum cofactor prior to its insertion into FDH. In Haemophilus influenzae (strain ATCC 51907 / DSM 11121 / KW20 / Rd), this protein is Sulfur carrier protein FdhD.